Reading from the N-terminus, the 225-residue chain is PKHD-type hydroxylase YbiX (225 aa).

The Fe2OG dioxygenase domain maps to 78 to 177; it reads TLSTPLFNRY…RVASFMWIQS (100 aa). Residues H96, D98, and H158 each contribute to the Fe cation site. R168 contributes to the 2-oxoglutarate binding site.

The cofactor is Fe(2+). Requires L-ascorbate as cofactor.

The polypeptide is PKHD-type hydroxylase YbiX (Escherichia coli O81 (strain ED1a)).